Consider the following 440-residue polypeptide: F-box protein pof12 (440 aa).

The F-box domain occupies 8-54; the sequence is KNPASIFSHETLLHVLNDLSAHDLAALERVSRSWNSIVRRSSVWHNL.

Interacts with skp1.

It localises to the nucleus. The sequence is that of F-box protein pof12 (pof12) from Schizosaccharomyces pombe (strain 972 / ATCC 24843) (Fission yeast).